Consider the following 410-residue polypeptide: CinA-like protein (410 aa).

The protein belongs to the CinA family.

The sequence is that of CinA-like protein from Anaeromyxobacter sp. (strain Fw109-5).